Reading from the N-terminus, the 297-residue chain is MKHFLEISQLSSEQIESLLQRALYFKHTKQYPSYSQSIIANLFYENSTRTRISFELAERHLAMSVVNLDLQTSSETKGEAIEDTIRTLAAMGIQYFVIRHKQDGLQQNLANKLGDTVNIINAGDGTHAHPSQAILDMVTIIEQKKRLDKLKIAILGNIKHSRVANSFQCICSKLGVGELVLISPEIWQPSQVHFGRVTDNLNEGLEGADVVICLRVQKERLLQDDHLDLDFYRNNFALTQKSLSYAKPDAMVMHPGPMNRGVEIDSEVADGNQSCILQQVTNGVYARMAILESLIAS.

The carbamoyl phosphate site is built by Arg49 and Thr50. Lys77 is a binding site for L-aspartate. Carbamoyl phosphate is bound by residues Arg99, His129, and Gln132. Positions 162 and 215 each coordinate L-aspartate. Carbamoyl phosphate contacts are provided by Gly256 and Pro257.

Belongs to the aspartate/ornithine carbamoyltransferase superfamily. ATCase family. In terms of assembly, heterododecamer (2C3:3R2) of six catalytic PyrB chains organized as two trimers (C3), and six regulatory PyrI chains organized as three dimers (R2).

The enzyme catalyses carbamoyl phosphate + L-aspartate = N-carbamoyl-L-aspartate + phosphate + H(+). It participates in pyrimidine metabolism; UMP biosynthesis via de novo pathway; (S)-dihydroorotate from bicarbonate: step 2/3. Its function is as follows. Catalyzes the condensation of carbamoyl phosphate and aspartate to form carbamoyl aspartate and inorganic phosphate, the committed step in the de novo pyrimidine nucleotide biosynthesis pathway. This Legionella pneumophila subsp. pneumophila (strain Philadelphia 1 / ATCC 33152 / DSM 7513) protein is Aspartate carbamoyltransferase catalytic subunit.